Reading from the N-terminus, the 949-residue chain is UvrABC system protein A (949 aa).

42-49 (GLSGSGKS) is a binding site for ATP. The C4-type zinc finger occupies 262-289 (CPVCSYSLPELEPRLFSFNNPMGSCPTC). ABC transporter domains are found at residues 319 to 596 (WDKR…ENSV) and 616 to 945 (VNPD…KYLK). ATP is bound at residue 649-656 (GVSGSGKS). The C4-type zinc finger occupies 748 to 774 (CEACQGDGVIKVEMHFLPDVYVPCEVC).

The protein belongs to the ABC transporter superfamily. UvrA family. In terms of assembly, forms a heterotetramer with UvrB during the search for lesions.

The protein localises to the cytoplasm. Functionally, the UvrABC repair system catalyzes the recognition and processing of DNA lesions. UvrA is an ATPase and a DNA-binding protein. A damage recognition complex composed of 2 UvrA and 2 UvrB subunits scans DNA for abnormalities. When the presence of a lesion has been verified by UvrB, the UvrA molecules dissociate. This is UvrABC system protein A from Neisseria meningitidis serogroup B (strain ATCC BAA-335 / MC58).